A 240-amino-acid chain; its full sequence is Aquaporin SIP1-1 (240 aa).

2 consecutive transmembrane segments (helical) span residues 13-33 (LMTF…AAII) and 44-64 (APLV…TVIF). The NPA 1 signature appears at 70 to 72 (NPT). Transmembrane regions (helical) follow at residues 89 to 109 (SLAI…LAIM), 132 to 152 (GAIA…LIIL), and 163 to 183 (FLLA…TGPA). The NPA 2 motif lies at 185–187 (NPA). A helical membrane pass occupies residues 203–223 (DHIYVYWISSFVGALSAALLF).

The protein belongs to the MIP/aquaporin (TC 1.A.8) family. SIP (TC 1.A.8.10) subfamily. In terms of tissue distribution, expressed in roots and above ground. Expressed in elongating regions of the root tips, trichome cells of the rosette leaves, vascular tissues of the flower petals, stigma, stamens (anthers and filaments), pollen and the top and bottom (receptacle) of siliques.

Its subcellular location is the endoplasmic reticulum membrane. Water channel required to facilitate the transport of water across cell membrane. This is Aquaporin SIP1-1 (SIP1-1) from Arabidopsis thaliana (Mouse-ear cress).